The following is a 342-amino-acid chain: tRNA N6-adenosine threonylcarbamoyltransferase (342 aa).

Residues His-114 and His-118 each contribute to the Fe cation site. Substrate contacts are provided by residues 136–140, Asp-169, Gly-182, Asp-186, and Asn-275; that span reads LVSGG. Position 301 (Asp-301) interacts with Fe cation.

This sequence belongs to the KAE1 / TsaD family. Requires Fe(2+) as cofactor.

It is found in the cytoplasm. It catalyses the reaction L-threonylcarbamoyladenylate + adenosine(37) in tRNA = N(6)-L-threonylcarbamoyladenosine(37) in tRNA + AMP + H(+). Its function is as follows. Required for the formation of a threonylcarbamoyl group on adenosine at position 37 (t(6)A37) in tRNAs that read codons beginning with adenine. Is involved in the transfer of the threonylcarbamoyl moiety of threonylcarbamoyl-AMP (TC-AMP) to the N6 group of A37, together with TsaE and TsaB. TsaD likely plays a direct catalytic role in this reaction. In Streptococcus pyogenes serotype M2 (strain MGAS10270), this protein is tRNA N6-adenosine threonylcarbamoyltransferase.